Consider the following 237-residue polypeptide: UPF0758 protein Veis_1654 (237 aa).

The MPN domain maps to 115–237 (VFDTPDAVKH…ALSMAEMGLL (123 aa)). The Zn(2+) site is built by His-186, His-188, and Asp-199. Positions 186–199 (HNHPSGSVQPSRAD) match the JAMM motif motif.

Belongs to the UPF0758 family.

This is UPF0758 protein Veis_1654 from Verminephrobacter eiseniae (strain EF01-2).